The sequence spans 562 residues: Restriction of telomere capping protein 5 (562 aa).

The tract at residues 1–21 is disordered; sequence MGQTPSVESQESKETKNEMPE. Positions 10 to 21 are enriched in basic and acidic residues; sequence QESKETKNEMPE. A TLDc domain is found at 283 to 509; it reads KLMTYPLVAQ…IRDVEVWGCG (227 aa).

The protein belongs to the RTC5 family.

Its subcellular location is the cytoplasm. In terms of biological role, may be involved in a process influencing telomere capping. This chain is Restriction of telomere capping protein 5 (RTC5), found in Vanderwaltozyma polyspora (strain ATCC 22028 / DSM 70294 / BCRC 21397 / CBS 2163 / NBRC 10782 / NRRL Y-8283 / UCD 57-17) (Kluyveromyces polysporus).